A 1042-amino-acid chain; its full sequence is Ubiquitin carboxyl-terminal hydrolase 38 (1042 aa).

In terms of domain architecture, USP spans 445 to 949; that stretch reads TGLINLGNTC…TAYVLLYKKQ (505 aa). The Nucleophile role is filled by cysteine 454. Histidine 857 acts as the Proton acceptor in catalysis.

Belongs to the peptidase C19 family. Interacts with isoform 1 of FBXW7; this interaction prevents FBXW7-mediated degradation of MYC. In terms of tissue distribution, highly expressed in skeletal muscle. Expressed in adrenal gland.

It is found in the cytoplasm. It localises to the nucleus. The enzyme catalyses Thiol-dependent hydrolysis of ester, thioester, amide, peptide and isopeptide bonds formed by the C-terminal Gly of ubiquitin (a 76-residue protein attached to proteins as an intracellular targeting signal).. Deubiquitinating enzyme that plays a role in various cellular processes, including DNA repair, cell cycle regulation, and immune response. Plays a role in the inhibition of type I interferon signaling by mediating the 'Lys-33' to 'Lys-48' ubiquitination transition of TBK1 leading to its degradation. Cleaves the ubiquitin chain from the histone demethylase LSD1/KDM1A and prevents it from degradation by the 26S proteasome, thus maintaining LSD1 protein level in cells. Plays a role in the DNA damage response by regulating the deacetylase activity of HDAC1. Mechanistically, removes the 'Lys-63'-linked ubiquitin chain promoting the deacetylase activity of HDAC1 in response to DNA damage. Also acts as a specific deubiquitinase of histone deacetylase 3/HDAC3 and cleaves its 'Lys-63'-linked ubiquitin chains to lower its histone deacetylase activity. Regulates MYC levels and cell proliferation via antagonizing ubiquitin E3 ligase FBXW7 thereby preventing MYC 'Lys-48'-linked ubiquitination and degradation. Participates in antiviral response by removing both 'Lys-48'-linked and 'Lys-63'-linked polyubiquitination of Zika virus envelope protein E. Constitutively associated with IL-33R/IL1RL1, deconjugates its 'Lys-27'-linked polyubiquitination resulting in its autophagic degradation. This Homo sapiens (Human) protein is Ubiquitin carboxyl-terminal hydrolase 38 (USP38).